Reading from the N-terminus, the 372-residue chain is Aryl-hydrocarbon-interacting protein-like 1 (372 aa).

Residues 53–145 (RQVDQPMHII…DLDELQKEPQ (93 aa)) enclose the PPIase FKBP-type domain. 3 TPR repeats span residues 178–211 (VPVLHGEGNRLFKLGRYEEASSKYQEAIICLRNL), 230–263 (NTLTLNYCQCLLKKEEYYEVLEHTSDILRHHPGI), and 264–297 (VKAYYVRARAHAEVWNEAEAKADLQKVLELEPSM). Residues 315 to 372 (KQEEERLRCRNMLSQGATQPPTEPPAEPHTAPPAELSTGPPAEPPAELPLSPGHSLQH) form a disordered region. Residues 335-345 (PTEPPAEPHTA) show a composition bias toward pro residues.

In terms of assembly, interacts with NUB1.

The protein resides in the cytoplasm. Its subcellular location is the nucleus. May be important in protein trafficking and/or protein folding and stabilization. This Papio cynocephalus (Yellow baboon) protein is Aryl-hydrocarbon-interacting protein-like 1 (AIPL1).